The following is a 109-amino-acid chain: Cell division protein ZapA (109 aa).

The stretch at 21–99 (PEQQEALNQA…IEQALLEQGK (79 aa)) forms a coiled coil.

This sequence belongs to the ZapA family. Type 1 subfamily. As to quaternary structure, homodimer. Interacts with FtsZ.

It is found in the cytoplasm. In terms of biological role, activator of cell division through the inhibition of FtsZ GTPase activity, therefore promoting FtsZ assembly into bundles of protofilaments necessary for the formation of the division Z ring. It is recruited early at mid-cell but it is not essential for cell division. This is Cell division protein ZapA from Pectobacterium atrosepticum (strain SCRI 1043 / ATCC BAA-672) (Erwinia carotovora subsp. atroseptica).